Consider the following 837-residue polypeptide: Katanin p80 WD40 repeat-containing subunit B1 homolog KTN80.4 (837 aa).

WD repeat units follow at residues 14–54 (AHSA…AILS), 57–96 (GHSS…IVRT), 99–138 (GHRS…CIHT), 141–182 (GHTR…TEFK), 184–222 (HEGQ…LIGS), 225–265 (PETA…DGVD), and 267–304 (GWSR…TEPC). Residues 115–131 (FFASGSLDTNLKIWDIR) carry the DWD box motif. Disordered stretches follow at residues 307-328 (GDTA…DPVV), 358-462 (GRLS…ANPV), and 501-614 (LQAA…LVIN). Polar residues-rich tracts occupy residues 376–387 (IGRSSTSQNSES) and 412–450 (TFSS…TSRR). Residues 509 to 520 (SPSSRNNPDLPD) are compositionally biased toward low complexity. Composition is skewed to basic and acidic residues over residues 553–563 (ATERSINDFRY) and 580–595 (RNHD…RSNR).

The protein belongs to the WD repeat KATNB1 family. As to quaternary structure, component of KTN80-KTN1 complexes composed of a hexamer of KTN1-KTN80 heterodimers that sense microtubule (MT) geometry to confer precise MT severing. Interacts directly with AAA1/KTN1, and weakly with KTN80.1 and KTN80.3. As to expression, expressed in siliques, flowers, leaves, stems and roots.

The protein resides in the cytoplasm. It is found in the cytoskeleton. Its function is as follows. May participate in a complex which severs microtubules in an ATP-dependent manner. This activity may promote rapid reorganization of cellular microtubule arrays. Confers precision to microtubule (MT) severing by specific targeting of KTN1 to MT cleavage sites such as crossover or branching nucleation sites. Together with other KTN80s, regulates cell elongation by modulating MT organization. The chain is Katanin p80 WD40 repeat-containing subunit B1 homolog KTN80.4 from Arabidopsis thaliana (Mouse-ear cress).